The sequence spans 251 residues: Triosephosphate isomerase (251 aa).

9–11 serves as a coordination point for substrate; it reads NWK. H95 acts as the Electrophile in catalysis. E167 functions as the Proton acceptor in the catalytic mechanism. Substrate-binding positions include G173, S213, and 234 to 235; that span reads GG.

The protein belongs to the triosephosphate isomerase family. Homodimer.

It is found in the cytoplasm. It catalyses the reaction D-glyceraldehyde 3-phosphate = dihydroxyacetone phosphate. It participates in carbohydrate biosynthesis; gluconeogenesis. Its pathway is carbohydrate degradation; glycolysis; D-glyceraldehyde 3-phosphate from glycerone phosphate: step 1/1. In terms of biological role, involved in the gluconeogenesis. Catalyzes stereospecifically the conversion of dihydroxyacetone phosphate (DHAP) to D-glyceraldehyde-3-phosphate (G3P). This Ligilactobacillus salivarius (strain UCC118) (Lactobacillus salivarius) protein is Triosephosphate isomerase.